The sequence spans 110 residues: DNA-binding protein Tneu_1679 (110 aa).

The protein belongs to the PDCD5 family.

This chain is DNA-binding protein Tneu_1679, found in Pyrobaculum neutrophilum (strain DSM 2338 / JCM 9278 / NBRC 100436 / V24Sta) (Thermoproteus neutrophilus).